Here is a 735-residue protein sequence, read N- to C-terminus: Diacylglycerol kinase alpha (735 aa).

EF-hand domains follow at residues 110-145 (RPED…MMRV) and 155-190 (ELRP…TVPL). D123, D125, N127, E134, D168, D170, S172, S174, and E179 together coordinate Ca(2+). 2 consecutive Phorbol-ester/DAG-type zinc fingers follow at residues 205–253 (QHMW…ALPC) and 269–319 (SHVW…GHEC). Residues 372–506 (PNTHPLLVFV…MDRWSVEVIP (135 aa)) enclose the DAGKc domain. Position 484 is an N6-acetyllysine (K484).

Belongs to the eukaryotic diacylglycerol kinase family. Monomer. Expressed in lymphocytes.

The protein localises to the cytoplasm. The protein resides in the cytosol. It carries out the reaction a 1,2-diacyl-sn-glycerol + ATP = a 1,2-diacyl-sn-glycero-3-phosphate + ADP + H(+). It catalyses the reaction a 1-O-alkyl-sn-glycerol + ATP = a 1-O-alkyl-sn-glycero-3-phosphate + ADP + H(+). The enzyme catalyses 1-O-alkyl-2-acyl-sn-glycerol + ATP = 1-O-alkyl-2-acyl-sn-glycero-3-phosphate + ADP + H(+). The catalysed reaction is 1,2-dihexadecanoyl-sn-glycerol + ATP = 1,2-dihexadecanoyl-sn-glycero-3-phosphate + ADP + H(+). It carries out the reaction 1-hexadecanoyl-2-(9Z-octadecenoyl)-sn-glycerol + ATP = 1-hexadecanoyl-2-(9Z-octadecenoyl)-sn-glycero-3-phosphate + ADP + H(+). It catalyses the reaction 2-(9Z-octadecenoyl)-glycerol + ATP = 2-(9Z-octadecenoyl)-sn-glycero-3-phosphate + ADP + H(+). The enzyme catalyses 1,2-di-(9Z-octadecenoyl)-sn-glycerol + ATP = 1,2-di-(9Z-octadecenoyl)-sn-glycero-3-phosphate + ADP + H(+). The catalysed reaction is 1-octadecanoyl-2-(5Z,8Z,11Z,14Z-eicosatetraenoyl)-sn-glycerol + ATP = 1-octadecanoyl-2-(5Z,8Z,11Z,14Z-eicosatetraenoyl)-sn-glycero-3-phosphate + ADP + H(+). It carries out the reaction 1,2-didecanoyl-sn-glycerol + ATP = 1,2-didecanoyl-sn-glycero-3-phosphate + ADP + H(+). It catalyses the reaction 1-O-hexadecyl-2-acetyl-sn-glycerol + ATP = 1-O-hexadecyl-2-acetyl-sn-glycero-3-phosphate + ADP + H(+). The enzyme catalyses 1-O-hexadecyl-2-(5Z,8Z,11Z,14Z-eicosatetraenoyl)-sn-glycerol + ATP = 1-O-hexadecyl-2-(5Z,8Z,11Z,14Z-eicosatetraenoyl)-sn-glycero-3-phosphate + ADP + H(+). The catalysed reaction is 1-O-hexadecyl-2-(9Z-octadecenoyl)-sn-glycerol + ATP = 1-O-hexadecyl-2-(9Z-octadecenoyl)-sn-glycero-3-phosphate + ADP + H(+). It carries out the reaction 1-O-hexadecyl-sn-glycerol + ATP = 1-O-hexadecyl-sn-glycero-3-phosphate + ADP + H(+). Its pathway is lipid metabolism; glycerolipid metabolism. Stimulated by calcium and phosphatidylserine. Its function is as follows. Diacylglycerol kinase that converts diacylglycerol/DAG into phosphatidic acid/phosphatidate/PA and regulates the respective levels of these two bioactive lipids. Thereby, acts as a central switch between the signaling pathways activated by these second messengers with different cellular targets and opposite effects in numerous biological processes. Also plays an important role in the biosynthesis of complex lipids. Can also phosphorylate 1-alkyl-2-acylglycerol in vitro as efficiently as diacylglycerol provided it contains an arachidonoyl group. Also involved in the production of alkyl-lysophosphatidic acid, another bioactive lipid, through the phosphorylation of 1-alkyl-2-acetyl glycerol. This is Diacylglycerol kinase alpha (DGKA) from Homo sapiens (Human).